The chain runs to 259 residues: uncharacterized protein (259 aa).

The N-acetyltransferase domain occupies 110–259 (QMGHPLTAWG…VHTVFHYFLT (150 aa)).

In terms of biological role, may be involved in maturation of the outermost layer of the spore. This is an uncharacterized protein from Bacillus subtilis (strain 168).